Here is a 152-residue protein sequence, read N- to C-terminus: MGRSISVSFGLLVVFLSLSGTGADQDCLPGWSFYEGGCYYVFDVKTWEDAEKFCQKQSNGKHLATIEWLGKANFVADLVTLNSDPRLDWIGLRVEDKRQQCSSHWTDGSAVSYENVVHNTKCFGLDQKTGYRTWVALRCELAYHFICSRVPR.

Residues 1–23 (MGRSISVSFGLLVVFLSLSGTGA) form the signal peptide. 3 cysteine pairs are disulfide-bonded: C27–C38, C54–C147, and C122–C139. The 115-residue stretch at 34-148 (YEGGCYYVFD…CELAYHFICS (115 aa)) folds into the C-type lectin domain.

As to quaternary structure, heterodimer with the beta subunit (AC W5XCJ6); disulfide-linked. Expressed by the venom gland.

Its subcellular location is the secreted. Inhibits human breast cancer cells (MDA-MB231) migration and proliferation, as well as their adhesion to fibrinogen and fibronectin. This inhibition may be due to the binding to receptors of the integrin family, probably alpha-v/beta-3 (ITGAV/ITGB3) (40% inhibition of cell adhesion) and alpha-5/beta-1 (ITGA5/ITGB1) (by comparison with lebectin). The sequence is that of Snaclec lebecin subunit alpha from Macrovipera lebetinus (Levantine viper).